A 370-amino-acid chain; its full sequence is Biotin synthase (370 aa).

The 227-residue stretch at 50-276 folds into the Radical SAM core domain; it reads FSDGTVDACS…IAVYRFLHPE (227 aa). Residues Cys-68, Cys-72, and Cys-75 each coordinate [4Fe-4S] cluster. Positions 208 and 280 each coordinate [2Fe-2S] cluster. Positions 328–370 are disordered; sequence AGLEPNREANTFDPESVKARHRSPAAETASNANRTNATTETDD. The span at 352–370 shows a compositional bias: low complexity; it reads AAETASNANRTNATTETDD.

It belongs to the radical SAM superfamily. Biotin synthase family. As to quaternary structure, homodimer. [4Fe-4S] cluster serves as cofactor. [2Fe-2S] cluster is required as a cofactor.

It carries out the reaction (4R,5S)-dethiobiotin + (sulfur carrier)-SH + 2 reduced [2Fe-2S]-[ferredoxin] + 2 S-adenosyl-L-methionine = (sulfur carrier)-H + biotin + 2 5'-deoxyadenosine + 2 L-methionine + 2 oxidized [2Fe-2S]-[ferredoxin]. Its pathway is cofactor biosynthesis; biotin biosynthesis; biotin from 7,8-diaminononanoate: step 2/2. In terms of biological role, catalyzes the conversion of dethiobiotin (DTB) to biotin by the insertion of a sulfur atom into dethiobiotin via a radical-based mechanism. This Natronomonas pharaonis (strain ATCC 35678 / DSM 2160 / CIP 103997 / JCM 8858 / NBRC 14720 / NCIMB 2260 / Gabara) (Halobacterium pharaonis) protein is Biotin synthase.